A 588-amino-acid polypeptide reads, in one-letter code: Calcium/calmodulin-dependent protein kinase kinase 2 (588 aa).

Positions 1 to 11 are enriched in polar residues; the sequence is MSSCVSSQPTS. 2 disordered regions span residues 1-34 and 64-147; these read MSSC…KPCE and DLNL…PTVE. Serine 2 bears the N-acetylserine mark. Phosphoserine occurs at positions 99, 114, 129, 133, and 137. Over residues 101 to 116 the composition is skewed to polar residues; that stretch reads QEPSQGGPASSSNSLD. Low complexity predominate over residues 124-139; it reads PSLSYSPASSPQSSPR. Residues 165–446 enclose the Protein kinase domain; the sequence is YTLKDEIGKG…VPEIKLHPWV (282 aa). ATP contacts are provided by residues 171–179 and lysine 194; that span reads IGKGSYGVV. The RP domain stretch occupies residues 204 to 226; it reads QAGFPRRPPPRGARPAPGGCIQP. The disordered stretch occupies residues 205–225; sequence AGFPRRPPPRGARPAPGGCIQ. Aspartate 312 acts as the Proton acceptor in catalysis. Residues 472–477 are autoinhibitory domain; sequence ENSVKH. Residues 475–500 are calmodulin-binding; it reads VKHIPSLATVILVKTMIRKRSFGNPF. A phosphoserine mark is found at serine 495, serine 511, threonine 522, and serine 572. Residues 497–588 form a disordered region; sequence GNPFEGSRRE…LQPEEVMEPE (92 aa). Positions 521-536 are enriched in basic and acidic residues; it reads PTREWEPLSEPKEARQ. Residues 570–580 show a composition bias toward pro residues; the sequence is PGSPPRMPPLQ.

This sequence belongs to the protein kinase superfamily. Ser/Thr protein kinase family. In terms of assembly, interacts with calmodulin. In terms of processing, autophosphorylated and phosphorylated by PKA. Each isoform may show a different pattern of phosphorylation. Expressed in all tissues tested. A differential expression pattern compared to CAMKK1 is observed in the brain.

The protein localises to the nucleus. It localises to the cytoplasm. Its subcellular location is the cell projection. The protein resides in the neuron projection. The catalysed reaction is L-seryl-[protein] + ATP = O-phospho-L-seryl-[protein] + ADP + H(+). It catalyses the reaction L-threonyl-[protein] + ATP = O-phospho-L-threonyl-[protein] + ADP + H(+). Its activity is regulated as follows. Activated by Ca(2+)/calmodulin. Binding of calmodulin may relieve intrasteric autoinhibition. Autophosphorylation does not alter activity or regulation by Ca(2+)/calmodulin. In part, activity is independent on Ca(2+)/calmodulin. Functionally, calcium/calmodulin-dependent protein kinase belonging to a proposed calcium-triggered signaling cascade involved in a number of cellular processes. Phosphorylates CAMK1, CAMK4 and CAMK1D. Efficiently phosphorylates 5'-AMP-activated protein kinase (AMPK) trimer, including that consisting of PRKAA1, PRKAB1 and PRKAG1. This phosphorylation is stimulated in response to Ca(2+) signals. May play a role in neurite growth. Isoform 2 may promote neurite elongation, while isoform 1 may promoter neurite branching. May be involved in hippocampal activation of CREB1. In Mus musculus (Mouse), this protein is Calcium/calmodulin-dependent protein kinase kinase 2 (Camkk2).